A 405-amino-acid polypeptide reads, in one-letter code: Threonine synthase (405 aa).

N6-(pyridoxal phosphate)lysine is present on Lys-106. Pyridoxal 5'-phosphate contacts are provided by residues Asn-132, 233-237, and Thr-371; that span reads GNAGN.

The protein belongs to the threonine synthase family. The cofactor is pyridoxal 5'-phosphate.

It carries out the reaction O-phospho-L-homoserine + H2O = L-threonine + phosphate. It participates in amino-acid biosynthesis; L-threonine biosynthesis; L-threonine from L-aspartate: step 5/5. Catalyzes the gamma-elimination of phosphate from L-phosphohomoserine and the beta-addition of water to produce L-threonine. The protein is Threonine synthase (thrC) of Methanocaldococcus jannaschii (strain ATCC 43067 / DSM 2661 / JAL-1 / JCM 10045 / NBRC 100440) (Methanococcus jannaschii).